The sequence spans 284 residues: Lipase chaperone (284 aa).

A helical membrane pass occupies residues 4 to 24; that stretch reads IAWSLGILVTIGALCAIVWPS.

This sequence belongs to the lipase chaperone family.

It localises to the cell inner membrane. Functionally, may be involved in the folding of the extracellular lipase during its passage through the periplasm. The polypeptide is Lipase chaperone (lifO) (Vibrio cholerae serotype O1 (strain ATCC 39315 / El Tor Inaba N16961)).